A 201-amino-acid chain; its full sequence is Regulator of G-protein signaling rgs-1 (201 aa).

Residues Ser37–Thr156 form the RGS domain. Positions Gly168–Val201 are disordered. The segment covering Asp170–Arg183 has biased composition (basic and acidic residues).

Expressed in most or all neurons.

In terms of biological role, inhibits G protein signaling in nervous system, interacting preferentially with the G(O) subfamily member goa-1. In vitro, protein acts as a GTPase activator of goa-1. Rgs-1 and rgs-2 redundantly adjust signaling when worms are fed to allow rapid induction of egg-laying behavior. This Caenorhabditis elegans protein is Regulator of G-protein signaling rgs-1 (rgs-1).